The primary structure comprises 195 residues: FMN-dependent NADH:quinone oxidoreductase (195 aa).

Residues Ser-10, 16-18 (SQS), and 91-94 (MYNF) contribute to the FMN site.

This sequence belongs to the azoreductase type 1 family. As to quaternary structure, homodimer. It depends on FMN as a cofactor.

It carries out the reaction 2 a quinone + NADH + H(+) = 2 a 1,4-benzosemiquinone + NAD(+). The enzyme catalyses N,N-dimethyl-1,4-phenylenediamine + anthranilate + 2 NAD(+) = 2-(4-dimethylaminophenyl)diazenylbenzoate + 2 NADH + 2 H(+). Its function is as follows. Quinone reductase that provides resistance to thiol-specific stress caused by electrophilic quinones. In terms of biological role, also exhibits azoreductase activity. Catalyzes the reductive cleavage of the azo bond in aromatic azo compounds to the corresponding amines. The chain is FMN-dependent NADH:quinone oxidoreductase from Aeromonas salmonicida (strain A449).